The sequence spans 426 residues: UPF0229 protein YeaH (426 aa).

The segment covering 78 to 92 (GNDHFIQNDRIERPQ) has biased composition (basic and acidic residues). The disordered stretch occupies residues 78–108 (GNDHFIQNDRIERPQDGGGSGSGNGQASQDG).

It belongs to the UPF0229 family.

This Salmonella arizonae (strain ATCC BAA-731 / CDC346-86 / RSK2980) protein is UPF0229 protein YeaH.